The primary structure comprises 513 residues: Na(+)/H(+) antiporter NhaB (513 aa).

11 consecutive transmembrane segments (helical) span residues 23–43 (LALI…PFVA), 52–72 (IFTL…LLAI), 97–117 (LLLM…LFIF), 144–164 (FLDA…FYGI), 202–222 (LMMH…VGEP), 238–258 (FFLR…LTCL), 303–323 (AIIG…VGLI), 348–368 (TESL…AVII), 391–411 (LFYI…VGTI), 447–467 (ATPN…APLI), and 475–495 (VWMA…CVEF).

The protein belongs to the NhaB Na(+)/H(+) (TC 2.A.34) antiporter family.

The protein resides in the cell inner membrane. It catalyses the reaction 2 Na(+)(in) + 3 H(+)(out) = 2 Na(+)(out) + 3 H(+)(in). Functionally, na(+)/H(+) antiporter that extrudes sodium in exchange for external protons. The protein is Na(+)/H(+) antiporter NhaB of Escherichia coli (strain SMS-3-5 / SECEC).